A 387-amino-acid chain; its full sequence is MSTHFDVIVVGAGSMGMAAGYYLAKQGVKTLLVDSFDPPHTNGSHHGDTRIIRHAYGEGREYVPFALRAQELWYELEKETHHKIFTQTGVLVYGPKGGSAFVSETMEAANIHSLEHELFEGKQLTDRWAGVEVPDNYEAIFEPNSGVLFSENCIQAYRELAEAHGATVLTYTPVEDFEVTEDLVTIKTAKGSYTANKLVVSMGAWNSKLLSKLDVEIPLQPYRQVVGFFECDEAKYSNNAHYPAFMVEVENGIYYGFPSFGGSGLKIGYHSYGQQIDPDTINREFGAYPEDEANLRKFLEQYMPGANGELKKGAVCMYTKTPDEHFVIDLHPKYSNVAIAAGFSGHGFKFSSVVGETLAQLATTGKTEHDISIFSLNRDALKKEAVK.

Position 6-36 (Asp-6–Phe-36) interacts with FAD. The residue at position 316 (Cys-316) is an S-8alpha-FAD cysteine.

It belongs to the MSOX/MTOX family. MSOX subfamily. In terms of assembly, monomer. The cofactor is FAD.

It is found in the cytoplasm. The catalysed reaction is sarcosine + O2 + H2O = formaldehyde + glycine + H2O2. Functionally, catalyzes the oxidative demethylation of sarcosine. This chain is Monomeric sarcosine oxidase (soxA), found in Bacillus sp. (strain NS-129).